The following is a 730-amino-acid chain: Heterogeneous nuclear ribonucleoprotein M (730 aa).

A compositionally biased stretch (low complexity) spans 1–13 (MAAGVEAAAEVAA). The disordered stretch occupies residues 1–62 (MAAGVEAAAE…NIKRGGNRFE (62 aa)). Residue A2 is modified to N-acetylalanine. A Glycyl lysine isopeptide (Lys-Gly) (interchain with G-Cter in SUMO2) cross-link involves residue K17. S29 is modified (phosphoserine). K37 participates in a covalent cross-link: Glycyl lysine isopeptide (Lys-Gly) (interchain with G-Cter in SUMO2). Residues 38 to 50 (GEGERPAQNEKRK) show a composition bias toward basic and acidic residues. Glycyl lysine isopeptide (Lys-Gly) (interchain with G-Cter in SUMO2) cross-links involve residues K69 and K83. RRM domains are found at residues 71-149 (YRAF…EDPD) and 204-281 (STVF…MDER). Phosphoserine is present on S86. Glycyl lysine isopeptide (Lys-Gly) (interchain with G-Cter in SUMO2) cross-links involve residues K88 and K127. An N6-acetyllysine; alternate modification is found at K134. Residue K134 forms a Glycyl lysine isopeptide (Lys-Gly) (interchain with G-Cter in SUMO2); alternate linkage. Glycyl lysine isopeptide (Lys-Gly) (interchain with G-Cter in SUMO2) cross-links involve residues K143 and K145. A Phosphoserine modification is found at S204. Residue K221 forms a Glycyl lysine isopeptide (Lys-Gly) (interchain with G-Cter in SUMO2) linkage. K277 is modified (N6-acetyllysine; alternate). A Glycyl lysine isopeptide (Lys-Gly) (interchain with G-Cter in SUMO2); alternate cross-link involves residue K277. Residues K285 and K345 each participate in a glycyl lysine isopeptide (Lys-Gly) (interchain with G-Cter in SUMO2) cross-link. S365 and S377 each carry phosphoserine. Glycyl lysine isopeptide (Lys-Gly) (interchain with G-Cter in SUMO2) cross-links involve residues K381 and K388. S397 is subject to Phosphoserine. 4 tandem repeats follow at residues 400-405 (GIERMG), 407-412 (GIDRLG), 415-420 (GMERMG), and 426-431 (GMDRVG). Positions 400 to 608 (GIERMGPGID…ALGAGIERMG (209 aa)) are 27 X 6 AA repeats of [GEVSTPAN]-[ILMV]-[DE]-[RH]-[MLVI]-[GAV]. A Phosphoserine modification is found at S432. Tandem repeats lie at residues 433–438 (EIERMG), 440–445 (VMDRMG), and 446–451 (SVERMG). S452 is subject to Phosphoserine. A run of 4 repeats spans residues 453–458 (GIERMG), 461–466 (GLDHMA), 468–473 (SIERMG), and 475–480 (TMERIG). Phosphoserine is present on S468. S481 is modified (phosphoserine). 16 consecutive repeat copies span residues 482–487 (GVERMG), 493–498 (GLERMA), 500–505 (PIDRVG), 507–512 (TIERMG), 514–519 (GVERMG), 521–526 (AIERMG), 528–533 (SMERMV), 540–545 (GLERMG), 547–552 (VMDRMA), 554–559 (GLERMG), 562–566 (NLERM), 567–572 (GLERMG), 575–579 (SLERM), 580–585 (GLERMG), 588–593 (SLERMG), and 603–608 (GIERMG). At R496 the chain carries Omega-N-methylarginine. Residue S528 is modified to Phosphoserine. S575 carries the post-translational modification Phosphoserine. S588 carries the post-translational modification Phosphoserine. S618, S633, and S637 each carry phosphoserine. A Glycyl lysine isopeptide (Lys-Gly) (interchain with G-Cter in SUMO2) cross-link involves residue K651. The 77-residue stretch at 653-729 (CQIFVRNLPF…REIDVRIDRN (77 aa)) folds into the RRM 3 domain. Residue T665 is modified to Phosphothreonine. K667 participates in a covalent cross-link: Glycyl lysine isopeptide (Lys-Gly) (interchain with G-Cter in SUMO2). K672 carries the post-translational modification N6-acetyllysine. Residues K685 and K692 each participate in a glycyl lysine isopeptide (Lys-Gly) (interchain with G-Cter in SUMO2) cross-link. K698 carries the post-translational modification N6-acetyllysine; alternate. A Glycyl lysine isopeptide (Lys-Gly) (interchain with G-Cter in SUMO2); alternate cross-link involves residue K698. A Glycyl lysine isopeptide (Lys-Gly) (interchain with G-Cter in SUMO1); alternate cross-link involves residue K698. S701 is subject to Phosphoserine. Residue K716 forms a Glycyl lysine isopeptide (Lys-Gly) (interchain with G-Cter in SUMO2) linkage.

In terms of assembly, identified in the spliceosome C complex. Interacts with PPIA/CYPA. Post-translationally, sumoylated.

The protein localises to the nucleus. It localises to the nucleolus. Functionally, pre-mRNA binding protein in vivo, binds avidly to poly(G) and poly(U) RNA homopolymers in vitro. Involved in splicing. Acts as a receptor for carcinoembryonic antigen in Kupffer cells, may initiate a series of signaling events leading to tyrosine phosphorylation of proteins and induction of IL-1 alpha, IL-6, IL-10 and tumor necrosis factor alpha cytokines. The chain is Heterogeneous nuclear ribonucleoprotein M (HNRNPM) from Homo sapiens (Human).